We begin with the raw amino-acid sequence, 184 residues long: ATP synthase subunit b, chloroplastic (184 aa).

Residues 27 to 49 (LATNPINLSVVLGVLIFFGKGVL) form a helical membrane-spanning segment.

It belongs to the ATPase B chain family. As to quaternary structure, F-type ATPases have 2 components, F(1) - the catalytic core - and F(0) - the membrane proton channel. F(1) has five subunits: alpha(3), beta(3), gamma(1), delta(1), epsilon(1). F(0) has four main subunits: a(1), b(1), b'(1) and c(10-14). The alpha and beta chains form an alternating ring which encloses part of the gamma chain. F(1) is attached to F(0) by a central stalk formed by the gamma and epsilon chains, while a peripheral stalk is formed by the delta, b and b' chains.

Its subcellular location is the plastid. It is found in the chloroplast thylakoid membrane. Its function is as follows. F(1)F(0) ATP synthase produces ATP from ADP in the presence of a proton or sodium gradient. F-type ATPases consist of two structural domains, F(1) containing the extramembraneous catalytic core and F(0) containing the membrane proton channel, linked together by a central stalk and a peripheral stalk. During catalysis, ATP synthesis in the catalytic domain of F(1) is coupled via a rotary mechanism of the central stalk subunits to proton translocation. Component of the F(0) channel, it forms part of the peripheral stalk, linking F(1) to F(0). This is ATP synthase subunit b, chloroplastic from Oenothera elata subsp. hookeri (Hooker's evening primrose).